The following is an 84-amino-acid chain: uncharacterized protein (84 aa).

Residues 5-31 (KIQEIINELDNLMNRERKYIELVATVE) are a coiled coil.

This is an uncharacterized protein from Methanocaldococcus jannaschii (strain ATCC 43067 / DSM 2661 / JAL-1 / JCM 10045 / NBRC 100440) (Methanococcus jannaschii).